Consider the following 423-residue polypeptide: SH2 domain-containing adapter protein F (423 aa).

Disordered regions lie at residues 1–87, 110–208, and 225–312; these read MQQE…STTR, DPFD…WEWK, and DLPW…GEWT. The span at 192-203 shows a compositional bias: acidic residues; sequence EDDERPPEEYDQ. Y201 bears the Phosphotyrosine mark. The SH2 domain occupies 323–418; that stretch reads WYHGAISRTD…AEHMSLLYPV (96 aa).

As to quaternary structure, interacts with phosphorylated 'Tyr-720' of PDGFRA via its SH2 domain. Post-translationally, may become phosphorylated upon binding to PDGFRA. Expressed in skeletal muscle, brain, liver, prostate, testis, ovary, small intestine and colon.

Functionally, adapter protein which may play a role in the regulation of apoptosis in response to PDGF. The protein is SH2 domain-containing adapter protein F of Homo sapiens (Human).